The following is a 295-amino-acid chain: Ribosomal RNA small subunit methyltransferase A (295 aa).

S-adenosyl-L-methionine contacts are provided by Asn29, Leu31, Gly56, Glu77, Asp102, and Asn128.

Belongs to the class I-like SAM-binding methyltransferase superfamily. rRNA adenine N(6)-methyltransferase family. RsmA subfamily.

The protein resides in the cytoplasm. It carries out the reaction adenosine(1518)/adenosine(1519) in 16S rRNA + 4 S-adenosyl-L-methionine = N(6)-dimethyladenosine(1518)/N(6)-dimethyladenosine(1519) in 16S rRNA + 4 S-adenosyl-L-homocysteine + 4 H(+). Specifically dimethylates two adjacent adenosines (A1518 and A1519) in the loop of a conserved hairpin near the 3'-end of 16S rRNA in the 30S particle. May play a critical role in biogenesis of 30S subunits. The polypeptide is Ribosomal RNA small subunit methyltransferase A (Listeria innocua serovar 6a (strain ATCC BAA-680 / CLIP 11262)).